The chain runs to 293 residues: MTRQKATLIGLIAIVLWSTMVGLIRGVSEGLGPVGGAAAIYSLSGLLLIFTVGFPRIRQIPKGYLLAGSLLFVSYEICLALSLGYAATHHQAIEVGMVNYLWPSLTILFAILFNGQKTNWLIVPGLLLALVGVCWVLGGDNGLHYDEIINNITTSPLSYFLAFIGAFIWAAYCTVTNKYARGFNGITVFVLLTGASLWVYYFLTPQPEMIFSTPVMIKLISAAFTLGFAYAAWNVGILHGNVTIMAVGSYFTPVLSSALAAVLLSAPLSFSFWQGALMVCGGSLLCWLATRRG.

Over 1 to 6 (MTRQKA) the chain is Cytoplasmic. An EamA 1 domain is found at 6 to 137 (ATLIGLIAIV…LALVGVCWVL (132 aa)). The chain crosses the membrane as a helical span at residues 7-27 (TLIGLIAIVLWSTMVGLIRGV). At 28 to 33 (SEGLGP) the chain is on the periplasmic side. Residues 34 to 54 (VGGAAAIYSLSGLLLIFTVGF) traverse the membrane as a helical segment. The Cytoplasmic portion of the chain corresponds to 55–62 (PRIRQIPK). A helical transmembrane segment spans residues 63–83 (GYLLAGSLLFVSYEICLALSL). The Periplasmic segment spans residues 84 to 92 (GYAATHHQA). Residues 93-113 (IEVGMVNYLWPSLTILFAILF) traverse the membrane as a helical segment. Over 114–118 (NGQKT) the chain is Cytoplasmic. A helical membrane pass occupies residues 119–139 (NWLIVPGLLLALVGVCWVLGG). Topologically, residues 140–155 (DNGLHYDEIINNITTS) are periplasmic. The helical transmembrane segment at 156–176 (PLSYFLAFIGAFIWAAYCTVT) threads the bilayer. The EamA 2 domain maps to 158–285 (SYFLAFIGAF…ALMVCGGSLL (128 aa)). At 177–182 (NKYARG) the chain is on the cytoplasmic side. The chain crosses the membrane as a helical span at residues 183-203 (FNGITVFVLLTGASLWVYYFL). Over 204–218 (TPQPEMIFSTPVMIK) the chain is Periplasmic. The chain crosses the membrane as a helical span at residues 219–239 (LISAAFTLGFAYAAWNVGILH). Residues 240 to 243 (GNVT) are Cytoplasmic-facing. The chain crosses the membrane as a helical span at residues 244 to 264 (IMAVGSYFTPVLSSALAAVLL). At 265 to 267 (SAP) the chain is on the periplasmic side. A helical membrane pass occupies residues 268 to 288 (LSFSFWQGALMVCGGSLLCWL). At 289 to 293 (ATRRG) the chain is on the cytoplasmic side.

Belongs to the drug/metabolite transporter (DMT) superfamily. Aromatic amino acid/paraquat exporter (ArAA/P-E) (TC 2.A.7.17) family.

The protein localises to the cell inner membrane. The enzyme catalyses L-phenylalanine(in) = L-phenylalanine(out). It catalyses the reaction L-tyrosine(in) = L-tyrosine(out). The catalysed reaction is L-tryptophan(in) = L-tryptophan(out). It carries out the reaction L-threonine(in) = L-threonine(out). The enzyme catalyses L-methionine(in) = L-methionine(out). It catalyses the reaction L-lysine(in) = L-lysine(out). The catalysed reaction is L-glutamate(out) = L-glutamate(in). It carries out the reaction L-valine(in) = L-valine(out). The enzyme catalyses L-isoleucine(in) = L-isoleucine(out). Amino acid transporter with broad substrate specificity. Can transport various amino acids, including phenylalanine, tyrosine, tryptophan, L-threonine, L-methionine, L-lysine, L-glutamate, L-valine and L-isoleucine. Overexpression confers resistance to phenylalanine and increases export of phenylalanine, tyrosine and tryptophan. The sequence is that of Aromatic amino acid exporter YddG (yddG) from Escherichia coli (strain K12).